A 198-amino-acid polypeptide reads, in one-letter code: Nucleoplasmin (198 aa).

Positions 35–38 (SDED) are acidic tract A1. The segment covering 125–145 (SWAEEEGEEEVEEEEEEEDPE) has biased composition (acidic residues). A disordered region spans residues 125-198 (SWAEEEGEEE…GRGRKPAAKK (74 aa)). The segment at 128-145 (EEEGEEEVEEEEEEEDPE) is acidic tract A2. Positions 150–167 (AVKRPAASKKGSQAKKKK) are enriched in basic residues. The Bipartite nuclear localization signal motif lies at 152 to 167 (KRPAASKKGSQAKKKK). Positions 172-174 (EEE) are acidic tract A3. A compositionally biased stretch (basic residues) spans 183-198 (KKGKGAGRGRKPAAKK).

Belongs to the nucleoplasmin family. As to quaternary structure, homopentamer. As to expression, expressed in oocytes.

The protein resides in the nucleus. Acts as a chaperone for histones, such as histone H2A-H2B, and thus regulates the assembly of nucleosome cores. Involved in chromatin remodeling, especially during fertilization and early embryonic development. May be involved in sperm chromatin decondensation during fertilization. In Rhinella marina (Cane toad), this protein is Nucleoplasmin.